Reading from the N-terminus, the 128-residue chain is Aspartate 1-decarboxylase (128 aa).

Ser25 functions as the Schiff-base intermediate with substrate; via pyruvic acid in the catalytic mechanism. A Pyruvic acid (Ser) modification is found at Ser25. A substrate-binding site is contributed by Thr57. Catalysis depends on Tyr58, which acts as the Proton donor. Position 73 to 75 (73 to 75 (GSA)) interacts with substrate.

The protein belongs to the PanD family. As to quaternary structure, heterooctamer of four alpha and four beta subunits. The cofactor is pyruvate. Post-translationally, is synthesized initially as an inactive proenzyme, which is activated by self-cleavage at a specific serine bond to produce a beta-subunit with a hydroxyl group at its C-terminus and an alpha-subunit with a pyruvoyl group at its N-terminus.

It localises to the cytoplasm. The enzyme catalyses L-aspartate + H(+) = beta-alanine + CO2. Its pathway is cofactor biosynthesis; (R)-pantothenate biosynthesis; beta-alanine from L-aspartate: step 1/1. Its function is as follows. Catalyzes the pyruvoyl-dependent decarboxylation of aspartate to produce beta-alanine. In Burkholderia multivorans (strain ATCC 17616 / 249), this protein is Aspartate 1-decarboxylase.